A 469-amino-acid chain; its full sequence is Sulfate adenylyltransferase subunit 1 (469 aa).

A tr-type G domain is found at 22–236 (KDMLRFLTCG…TLENIEIGND (215 aa)). The segment at 31–38 (GSVDDGKS) is G1. GTP is bound at residue 31–38 (GSVDDGKS). Residues 89 to 93 (GITID) form a G2 region. Residues 110 to 113 (DTPG) form a G3 region. GTP-binding positions include 110 to 114 (DTPGH) and 165 to 168 (NKMD). The tract at residues 165–168 (NKMD) is G4. Positions 202 to 204 (SAL) are G5.

It belongs to the TRAFAC class translation factor GTPase superfamily. Classic translation factor GTPase family. CysN/NodQ subfamily. As to quaternary structure, heterodimer composed of CysD, the smaller subunit, and CysN.

The catalysed reaction is sulfate + ATP + H(+) = adenosine 5'-phosphosulfate + diphosphate. It functions in the pathway sulfur metabolism; hydrogen sulfide biosynthesis; sulfite from sulfate: step 1/3. With CysD forms the ATP sulfurylase (ATPS) that catalyzes the adenylation of sulfate producing adenosine 5'-phosphosulfate (APS) and diphosphate, the first enzymatic step in sulfur assimilation pathway. APS synthesis involves the formation of a high-energy phosphoric-sulfuric acid anhydride bond driven by GTP hydrolysis by CysN coupled to ATP hydrolysis by CysD. The chain is Sulfate adenylyltransferase subunit 1 from Pseudoalteromonas atlantica (strain T6c / ATCC BAA-1087).